The sequence spans 338 residues: Phosphatidylinositol:ceramide inositolphosphotransferase (338 aa).

Topologically, residues 1–36 are cytoplasmic; the sequence is MTSHVTAHDVGGNEDIGTDHVPWYKQPLPLCTQVMR. A helical transmembrane segment spans residues 37–57; it reads FILLLLLTVMFLGVAILVANA. The Extracellular portion of the chain corresponds to 58–87; that stretch reads RMPDPEKVRPLPDLLLESIPKVALLENGTN. A helical membrane pass occupies residues 88–108; the sequence is VIIFLLNATTVVVGFKVFLLE. Over 109-116 the chain is Cytoplasmic; it reads RHMNGLPR. Residues 117 to 137 form a helical membrane-spanning segment; that stretch reads VTFLVGVPKIGSFLNRMAFGV. At 138-152 the chain is on the extracellular side; that stretch reads LDSGRRPFPLKNVFP. Residues 153-173 traverse the membrane as a helical segment; that stretch reads IMAIRFLTSYAVVMVFRAFVI. The Cytoplasmic segment spans residues 174–189; the sequence is MGTSYPATDNHCQNPQ. Residues 190 to 210 traverse the membrane as a helical segment; it reads VIEHPVLNVILTLVTLGSGAI. Topologically, residues 211-222 are extracellular; sequence HCGDLMFSGHTM. Residue histidine 220 is part of the active site. Residues 223 to 243 traverse the membrane as a helical segment; sequence ILSLAFILAWDYSPFLHPWAV. At 244–338 the chain is on the cytoplasmic side; it reads RVWVSVLLPI…TDASAALPEH (95 aa). Residues histidine 264 and aspartate 268 contribute to the active site.

It belongs to the sphingomyelin synthase family.

It is found in the membrane. Bidirectional lipid inositolphosphotransferase capable of converting phosphatidylinositol (PI) and ceramide to inositol-phosphorylceramide (IPC) and diacylglycerol (DAG) and vice versa. Direction is dependent on the relative concentrations of DAG and ceramide as phosphoinositol acceptors. Essential for viability of the pathogenic bloodstream stage of this human protozoan parasite and, consequently, can be considered as potential drug target. The polypeptide is Phosphatidylinositol:ceramide inositolphosphotransferase (Leishmania major).